The chain runs to 325 residues: Solute carrier family 35 member B1 (325 aa).

Helical transmembrane passes span 18–38, 54–74, 88–108, 139–159, 171–191, 213–233, 246–266, and 288–308; these read PVCF…QESI, FALS…KLLI, WLYA…NSAL, YPLA…LFMY, IFGY…LTGV, LWST…WEFL, ILLF…TVVY, and VILF…LVFL. Positions 321–325 match the Di-lysine motif motif; it reads KKTSH.

Belongs to the nucleotide-sugar transporter family. SLC35B subfamily.

Its subcellular location is the endoplasmic reticulum membrane. In terms of biological role, probable sugar transporter. This Gallus gallus (Chicken) protein is Solute carrier family 35 member B1 (SLC35B1).